The chain runs to 359 residues: Peptide chain release factor 1 (359 aa).

Gln-236 carries the N5-methylglutamine modification.

The protein belongs to the prokaryotic/mitochondrial release factor family. Post-translationally, methylated by PrmC. Methylation increases the termination efficiency of RF1.

It localises to the cytoplasm. Functionally, peptide chain release factor 1 directs the termination of translation in response to the peptide chain termination codons UAG and UAA. This is Peptide chain release factor 1 from Streptococcus pyogenes serotype M12 (strain MGAS2096).